Consider the following 156-residue polypeptide: Ribonuclease H (156 aa).

An RNase H type-1 domain is found at 1–142 (MGKQVEIFTD…CDELARAAAN (142 aa)). Mg(2+)-binding residues include Asp10, Glu48, Asp70, and Asp134.

Belongs to the RNase H family. Monomer. The cofactor is Mg(2+).

It is found in the cytoplasm. It catalyses the reaction Endonucleolytic cleavage to 5'-phosphomonoester.. Endonuclease that specifically degrades the RNA of RNA-DNA hybrids. The protein is Ribonuclease H of Photorhabdus luminescens (Xenorhabdus luminescens).